We begin with the raw amino-acid sequence, 555 residues long: CCR4-NOT transcription complex subunit 6-like (555 aa).

The segment at 1–152 (MRLIGMPKEK…NLYQDPDGTR (152 aa)) is required for interaction with CNOT1, CNOT3 and CNOT7. LRR repeat units lie at residues 57–78 (HLTA…IAKL), 80–101 (NLVY…LGNM), 103–125 (SLRE…GRLF), and 126–148 (QLQT…YQDP). A nuclease domain region spans residues 158 to 555 (MLDNLAVHPE…VNGVHLPNRR (398 aa)). E240 contributes to the Mg(2+) binding site. Positions 240, 276, 360, and 365 each coordinate substrate. Mg(2+) is bound at residue D410. The active-site Proton donor/acceptor is the D410. N412, N479, and F484 together coordinate substrate.

It belongs to the CCR4/nocturin family. As to quaternary structure, component of the CCR4-NOT complex; distinct complexes seem to exist that differ in the participation of probably mutually exclusive catalytic subunits; the complex contains two deadenylase subunits, CNOT6 or CNOT6L, and CNOT7 or CNOT8. Interacts with CNOT1, CNOT3, CNOT7, CNOT8 and CNOT9. Interacts with TOB1. Interacts with NANOS2. Interacts with ZFP36. Interacts with ZFP36L2. Interacts with RBM46. It depends on Mg(2+) as a cofactor. Highly expressed in placenta, skeletal muscle, pancreas, testis and leukocytes. Weakly expressed in heart, spleen and thymus.

Its subcellular location is the cytoplasm. The protein localises to the nucleus. It carries out the reaction Exonucleolytic cleavage of poly(A) to 5'-AMP.. Inhibited by free AMP, and with lesser efficiency also by CMP, GMP, UMP, ATP and neomycin. Its function is as follows. Has 3'-5' poly(A) exoribonuclease activity for synthetic poly(A) RNA substrate. Catalytic component of the CCR4-NOT complex which is one of the major cellular mRNA deadenylases and is linked to various cellular processes including bulk mRNA degradation, miRNA-mediated repression, translational repression during translational initiation and general transcription regulation. Additional complex functions may be a consequence of its influence on mRNA expression. May be involved in the deadenylation-dependent degradation of mRNAs through the 3'-UTR AU-rich element-mediated mechanism. Involved in deadenylation-dependent degradation of CDKN1B mRNA. Its mRNA deadenylase activity can be inhibited by TOB1. Mediates cell proliferation and cell survival and prevents cellular senescence. This is CCR4-NOT transcription complex subunit 6-like (CNOT6L) from Homo sapiens (Human).